Consider the following 312-residue polypeptide: Expansin-A24 (312 aa).

An N-terminal signal peptide occupies residues Met1–Gly27. The tract at residues Ala31 to Pro86 is disordered. The span at Gly40–Ala77 shows a compositional bias: low complexity. A run of 6 repeats spans residues His42–Ala47, His48–Ala53, His54–Ala59, His60–Ala65, His66–Ala71, and His72–Ala77. The tract at residues His42 to Ala77 is 6 X 6 AA tandem repeats of H-P-S-H-G-A. The region spanning Gln108–Gly218 is the Expansin-like EG45 domain. Residues His228–Asp307 enclose the Expansin-like CBD domain.

Belongs to the expansin family. Expansin A subfamily.

The protein resides in the secreted. It is found in the cell wall. Its subcellular location is the membrane. Causes loosening and extension of plant cell walls by disrupting non-covalent bonding between cellulose microfibrils and matrix glucans. No enzymatic activity has been found. The chain is Expansin-A24 (EXPA24) from Arabidopsis thaliana (Mouse-ear cress).